We begin with the raw amino-acid sequence, 234 residues long: Large ribosomal subunit protein uL1 (234 aa).

The protein belongs to the universal ribosomal protein uL1 family. As to quaternary structure, part of the 50S ribosomal subunit.

In terms of biological role, binds directly to 23S rRNA. The L1 stalk is quite mobile in the ribosome, and is involved in E site tRNA release. Protein L1 is also a translational repressor protein, it controls the translation of the L11 operon by binding to its mRNA. This Helicobacter pylori (strain G27) protein is Large ribosomal subunit protein uL1.